The chain runs to 421 residues: Diaminopimelate decarboxylase (421 aa).

At lysine 63 the chain carries N6-(pyridoxal phosphate)lysine. Residues glycine 242 and 278–281 contribute to the pyridoxal 5'-phosphate site; that span reads EPGR. Substrate-binding residues include arginine 281, arginine 317, and tyrosine 321. Residue cysteine 346 is the Proton donor of the active site. Substrate contacts are provided by glutamate 347 and tyrosine 375. A pyridoxal 5'-phosphate-binding site is contributed by tyrosine 375.

The protein belongs to the Orn/Lys/Arg decarboxylase class-II family. LysA subfamily. As to quaternary structure, homodimer. It depends on pyridoxal 5'-phosphate as a cofactor.

It catalyses the reaction meso-2,6-diaminopimelate + H(+) = L-lysine + CO2. It functions in the pathway amino-acid biosynthesis; L-lysine biosynthesis via DAP pathway; L-lysine from DL-2,6-diaminopimelate: step 1/1. Its function is as follows. Specifically catalyzes the decarboxylation of meso-diaminopimelate (meso-DAP) to L-lysine. The chain is Diaminopimelate decarboxylase from Zymomonas mobilis subsp. mobilis (strain ATCC 31821 / ZM4 / CP4).